We begin with the raw amino-acid sequence, 332 residues long: MRATVLGAGSWGTALASLLAGKGYTVTSWDKDAAVLDDIARNHRNERYLPGLHLPPTLHASAEVAKALEGAELVVLAVPSHAVRPVVIEAKRHVHAGTPIVCVAKGIELDTLMTMTEVVEDVLPVPLHPYLAVLSGPSFAKEVAKGLPTAVTVAARWERIAKQVQDAFHTKTFRPYTSGDVVGCEIGGCVKNVVAIAAGISDGMGFGANAMAALVTRGLAEITRLAVRKGANPLTLSGLAGLGDLVLTCSSDLSRNRTVGRGLAEGKTADAIQRELGQVAEGVRNARSARELAKRLGVEMPITEAIYRVLYEGLAPREAVTALMMRETKPEL.

NADPH-binding residues include Ser10, Trp11, Lys31, and Lys105. Residues Lys105, Gly136, and Ser138 each coordinate sn-glycerol 3-phosphate. Residue Ala140 coordinates NADPH. Positions 191, 244, 254, 255, and 256 each coordinate sn-glycerol 3-phosphate. The active-site Proton acceptor is Lys191. Residue Arg255 participates in NADPH binding. NADPH is bound by residues Val279 and Glu281.

It belongs to the NAD-dependent glycerol-3-phosphate dehydrogenase family.

Its subcellular location is the cytoplasm. The catalysed reaction is sn-glycerol 3-phosphate + NAD(+) = dihydroxyacetone phosphate + NADH + H(+). It carries out the reaction sn-glycerol 3-phosphate + NADP(+) = dihydroxyacetone phosphate + NADPH + H(+). The protein operates within membrane lipid metabolism; glycerophospholipid metabolism. In terms of biological role, catalyzes the reduction of the glycolytic intermediate dihydroxyacetone phosphate (DHAP) to sn-glycerol 3-phosphate (G3P), the key precursor for phospholipid synthesis. The chain is Glycerol-3-phosphate dehydrogenase [NAD(P)+] from Anaeromyxobacter dehalogenans (strain 2CP-C).